The chain runs to 466 residues: MSKTAIVEIFNSKFPIGTEVTVQGWIRTRRDSKAGISFLAIYDGSCFDPIQAVVPAALENYSDEVLNLTAGCSVQVTGELVESPGKGQQFEIQATQVEVLGFVQDPDTYPMSAKRHSIEYMREHAHLRARTNMFGAVTRVRNCLSHAMHNFFYEKGFNWISTPIITGSDAEGAGEMFRVSTLDLENLPRNDTGAIDYKKDFFGKETFLTVSGQLNAETYACALSKVYTFGPTFRAENSHTTRHLAEFWMVEPEIAFADLADAAQLAEDMLKYVFNAVLTERADDMAFFAQRVDKEAITRLEKIVSSEFVRMDYTDAIEILQNCGKEFEFPVAWGVDLQSEHERYLAEVHVGAPVILQNYPKDIKAFYMKLNADGKTVAAMDVLAPGIGEIIGGSQREEDLVALDKRFDEMGINKEDYSWYRDLRKYGTVPHAGFGLGFERLVSYVTGVQNIRDVIAFPRAPGSADF.

Belongs to the class-II aminoacyl-tRNA synthetase family. As to quaternary structure, homodimer.

The protein localises to the cytoplasm. It carries out the reaction tRNA(Asn) + L-asparagine + ATP = L-asparaginyl-tRNA(Asn) + AMP + diphosphate + H(+). The chain is Asparagine--tRNA ligase from Psychromonas ingrahamii (strain DSM 17664 / CCUG 51855 / 37).